A 945-amino-acid polypeptide reads, in one-letter code: MNFAEEEPSKKYCIKGKHVAIICATVVAVGLIVGLSVGLTRSCEPGTTPAPSNPPPHTSTALPPQDQNVCPDSDDESGEWKNFRLPDFIQPVHYDLEVKVLMEEDRYTGIVSISVNLSKDTRDLWLHIRETRITKLPELRRPSGEQVPIRRCFEYKKQEYVVIQAEEDLAATSGDSVYRLTIEFEGWLNGSLVGFYRTTYTEDGQTKSIAATDHEPTDARKSFPCFDEPNKKATYNISLIHPKEYSALSNMPVEKKETLDNDWKKTTFMKSVPMSTYLVCFAVHQFTSIQRTSRSGKPLTVYVQPNQKQTAEYAANITKAVFDFFEDYFAMEYSLPKLDKIAIPDFGTGAMENWGLVTYRETNLLYDPLLSASSNQQRVASVVAHELVHQWFGNIVTMDWWDDLWLNEGFASFFEFLGVNHAEADWQMLSQVLLEDVLPVQEDDSLMSSHPVVVTVSTPAEITSVFDGISYSKGASILRMLQDWITPEKFQKGCQIYLENFKFKNAKTSDFWDSLEKASNQPVKEVMDTWTSQMGYPVVTVSGKQNVTQKRFLLDYKADPSQPPSALGYTWNIPIKWTENGNSNITVYYRSNREGITLNANLSGDGFLKINPDHIGFYRVNYEAETWDWIAETLSSNHMNFSSADRSSFIDDAFALARAQLLDYEKALNLTRYLTSEKDFLPWERVISAVSYIISMFEDDRELYPLIETYFRSQVKPIADSLGWQDTGSHITKLLRASVLGFACKMGAGEALGNASQLFEAWLKGNESIPVNLRLLVYRYGMQNSGNEAAWNYTLEQYQKTSLAQEKEKLLYGLASVKDVTLLARYLEMLKDPNIIKTQDVFTVIRYISYNSYGKSMAWNWIQLNWDYLVNRFTINDRYLGRIVTIAEPFNTELQLWQMQSFFAKYPNAGAGAKPREQVLETVKNNIEWLKLNRKSISEWFTSMP.

At 1–18 the chain is on the cytoplasmic side; sequence MNFAEEEPSKKYCIKGKH. Residues 19–39 form a helical; Signal-anchor for type II membrane protein membrane-spanning segment; it reads VAIICATVVAVGLIVGLSVGL. The Extracellular portion of the chain corresponds to 40–945; sequence TRSCEPGTTP…SISEWFTSMP (906 aa). Positions 45–77 are disordered; it reads PGTTPAPSNPPPHTSTALPPQDQNVCPDSDDES. N-linked (GlcNAc...) asparagine glycans are attached at residues N116 and N189. Residue E215 coordinates substrate. N-linked (GlcNAc...) asparagine glycosylation is found at N236 and N316. 349–353 is a substrate binding site; that stretch reads GAMEN. Residue H385 participates in Zn(2+) binding. The active-site Proton acceptor is the E386. Residues H389 and E408 each coordinate Zn(2+). 8 N-linked (GlcNAc...) asparagine glycosylation sites follow: N546, N584, N601, N640, N669, N754, N766, and N792. Position 878 (R878) interacts with substrate.

This sequence belongs to the peptidase M1 family. As to quaternary structure, homodimer; disulfide-linked. Zn(2+) is required as a cofactor. As to expression, highest expression in kidney proximal tubules and ileum enterocytes. High expression also detected in liver and pituitary. Lower levels in heart, adrenal gland and brain. Not detected in aorta, lung or spleen. In heart, higher levels in ventricle than in atrium. Also expressed in glomerular mesangial cells.

It is found in the cell membrane. It catalyses the reaction Release of N-terminal glutamate (and to a lesser extent aspartate) from a peptide.. Its activity is regulated as follows. Substrate specificity is modulated by calcium which enhances the enzymatic activity for cleavage of acidic residues while reducing its activity with basic residues. Inhibited by aminopeptidase inhibitors amastatin and bestatin. Its function is as follows. Regulates central hypertension through its calcium-modulated preference to cleave N-terminal acidic residues from peptides such as angiotensin II. This is Glutamyl aminopeptidase (Enpep) from Rattus norvegicus (Rat).